We begin with the raw amino-acid sequence, 344 residues long: tRNA dimethylallyltransferase (344 aa).

43 to 50 provides a ligand contact to ATP; that stretch reads GPTCCGKS. 45 to 50 contributes to the substrate binding site; that stretch reads TCCGKS. The tract at residues 68 to 71 is interaction with substrate tRNA; it reads DSMQ.

This sequence belongs to the IPP transferase family. In terms of assembly, monomer. Requires Mg(2+) as cofactor.

The enzyme catalyses adenosine(37) in tRNA + dimethylallyl diphosphate = N(6)-dimethylallyladenosine(37) in tRNA + diphosphate. Catalyzes the transfer of a dimethylallyl group onto the adenine at position 37 in tRNAs that read codons beginning with uridine, leading to the formation of N6-(dimethylallyl)adenosine (i(6)A). This is tRNA dimethylallyltransferase from Protochlamydia amoebophila (strain UWE25).